Here is a 129-residue protein sequence, read N- to C-terminus: Large ribosomal subunit protein bL12 (129 aa).

The protein belongs to the bacterial ribosomal protein bL12 family. Homodimer. Part of the ribosomal stalk of the 50S ribosomal subunit. Forms a multimeric L10(L12)X complex, where L10 forms an elongated spine to which 2 to 4 L12 dimers bind in a sequential fashion. Binds GTP-bound translation factors.

Its function is as follows. Forms part of the ribosomal stalk which helps the ribosome interact with GTP-bound translation factors. Is thus essential for accurate translation. The chain is Large ribosomal subunit protein bL12 from Treponema denticola (strain ATCC 35405 / DSM 14222 / CIP 103919 / JCM 8153 / KCTC 15104).